A 238-amino-acid polypeptide reads, in one-letter code: Purine nucleoside phosphorylase DeoD-type (238 aa).

Position 4 (histidine 4) interacts with a purine D-ribonucleoside. Residues glycine 20, arginine 24, arginine 43, and 87 to 90 (RVGS) each bind phosphate. A purine D-ribonucleoside-binding positions include 179–181 (EME) and 203–204 (SD). Residue aspartate 204 is the Proton donor of the active site.

The protein belongs to the PNP/UDP phosphorylase family. In terms of assembly, homohexamer; trimer of homodimers.

It catalyses the reaction a purine D-ribonucleoside + phosphate = a purine nucleobase + alpha-D-ribose 1-phosphate. The catalysed reaction is a purine 2'-deoxy-D-ribonucleoside + phosphate = a purine nucleobase + 2-deoxy-alpha-D-ribose 1-phosphate. Catalyzes the reversible phosphorolytic breakdown of the N-glycosidic bond in the beta-(deoxy)ribonucleoside molecules, with the formation of the corresponding free purine bases and pentose-1-phosphate. This Haemophilus influenzae (strain PittEE) protein is Purine nucleoside phosphorylase DeoD-type.